The primary structure comprises 1388 residues: Rho-associated protein kinase 2 (1388 aa).

Positions 1-27 are disordered; it reads MSRPPPTGKMPGAPETAPGDGAGASRQ. Residues 92 to 354 enclose the Protein kinase domain; it reads YDVVKVIGRG…VEEIRQHPFF (263 aa). ATP contacts are provided by residues 98–106 and Lys121; that span reads IGRGAFGEV. The active-site Proton acceptor is Asp214. The region spanning 357-425 is the AGC-kinase C-terminal domain; that stretch reads DQWHWDNIRE…YRENLLLSDS (69 aa). Positions 363 to 784 are interaction with PPP1R12A; sequence NIRETAAPVV…INELLKQKDV (422 aa). An interaction with NPM1 region spans residues 373-420; that stretch reads PELSSDIDSSNFDDIEDDKGDVETFPIPKAFVGNQLPFIGFTYYRENL. Thr414 carries the post-translational modification Phosphothreonine; by ROCK2. Coiled-coil stretches lie at residues 429 to 1024 and 1053 to 1131; these read RETD…EKQL and DTDV…IGLD. An REM-1 domain is found at 497–573; sequence ALRQLEREKA…LDETNALLRT (77 aa). Tyr722 carries the phosphotyrosine; by SRC modification. The 69-residue stretch at 979 to 1047 folds into the RhoBD domain; sequence TSDVANLANE…LAEIMNRKEP (69 aa). Residues 979-1047 are RHOA binding; sequence TSDVANLANE…LAEIMNRKEP (69 aa). Position 1137 is a phosphoserine (Ser1137). The PH domain maps to 1150 to 1349; that stretch reads ESRLEGWLSL…WVSRLVKKIP (200 aa). Thr1212 carries the phosphothreonine modification. A Phorbol-ester/DAG-type zinc finger spans residues 1260–1315; it reads GHEFIPTLYHFPTNCEACMKPLWHMFKPPPALECRRCHIKCHKDHMDKKEEIIAPC. The disordered stretch occupies residues 1345-1388; it reads VKKIPKKPPAPDPFARSSPRTSMKIQQNQSIRRPSRQLAPNKPS. Residues Ser1362 and Ser1374 each carry the phosphoserine modification. The span at 1362 to 1376 shows a compositional bias: polar residues; the sequence is SPRTSMKIQQNQSIR.

It belongs to the protein kinase superfamily. AGC Ser/Thr protein kinase family. Homodimer. Interacts with IRS1. Interacts with RAF1. Interacts with RHOA (activated by GTP), RHOB and RHOC. Interacts with PPP1R12A. Interacts with EP300. Interacts with CHORDC1. Interacts with BRCA2. Interacts with NPM1; this interaction enhances ROCK2 activity. Interacts with SORL1. Interacts with PJVK. It depends on Mg(2+) as a cofactor. In terms of processing, phosphorylation at Tyr-722 reduces its binding to RHOA and is crucial for focal adhesion dynamics. Dephosphorylation by PTPN11 stimulates its RHOA binding activity. Post-translationally, cleaved by granzyme B during apoptosis. This leads to constitutive activation of the kinase and membrane blebbing. Expressed in the brain (at protein level).

The protein resides in the cytoplasm. Its subcellular location is the cell membrane. It is found in the nucleus. It localises to the cytoskeleton. The protein localises to the microtubule organizing center. The protein resides in the centrosome. The catalysed reaction is L-seryl-[protein] + ATP = O-phospho-L-seryl-[protein] + ADP + H(+). It carries out the reaction L-threonyl-[protein] + ATP = O-phospho-L-threonyl-[protein] + ADP + H(+). With respect to regulation, activated by RHOA binding. Inhibited by Y-27632. Protein kinase which is a key regulator of actin cytoskeleton and cell polarity. Involved in regulation of smooth muscle contraction, actin cytoskeleton organization, stress fiber and focal adhesion formation, neurite retraction, cell adhesion and motility via phosphorylation of ADD1, BRCA2, CNN1, EZR, DPYSL2, EP300, MSN, MYL9/MLC2, NPM1, RDX, PPP1R12A and VIM. Phosphorylates SORL1 and IRF4. Acts as a negative regulator of VEGF-induced angiogenic endothelial cell activation. Positively regulates the activation of p42/MAPK1-p44/MAPK3 and of p90RSK/RPS6KA1 during myogenic differentiation. Plays an important role in the timely initiation of centrosome duplication. Inhibits keratinocyte terminal differentiation. May regulate closure of the eyelids and ventral body wall through organization of actomyosin bundles. Plays a critical role in the regulation of spine and synaptic properties in the hippocampus. Plays an important role in generating the circadian rhythm of the aortic myofilament Ca(2+) sensitivity and vascular contractility by modulating the myosin light chain phosphorylation. The polypeptide is Rho-associated protein kinase 2 (ROCK2) (Homo sapiens (Human)).